The following is a 228-amino-acid chain: Eukaryotic translation initiation factor 4E-2 (228 aa).

Cys130 and Cys134 are oxidised to a cystine.

Belongs to the eukaryotic initiation factor 4E family. In terms of assembly, eIF4F is a multi-subunit complex, the composition of which varies with external and internal environmental conditions. It is composed of at least eIF4A, eIF4E and eIF4G. eIF4E is also known to interact with other partners. In terms of tissue distribution, highly expressed in all somatic tissues.

Its function is as follows. Recognizes and binds the 7-methylguanosine-containing mRNA cap during an early step in the initiation of protein synthesis and facilitates ribosome binding by inducing the unwinding of the mRNAs secondary structures. All 5 eIF4E proteins bind monomethyl cap structures. Only ife-1, ife-2 and ife-5 bind trimethyl cap structures which result from trans-splicing. Translation of trimethyl cap structure mRNAs may be regulated by intracellular redox state; disulfide bonds change the width and depth of the cap-binding cavity determining selectivity to mRNA caps. Probably by regulating mRNA translation in somatic cells, negatively regulates lifespan independently of daf-2/insulin and let-363/TOR pathways. Negatively regulates resistance to oxidative stress. May play a role in embryonic development. In Caenorhabditis elegans, this protein is Eukaryotic translation initiation factor 4E-2 (ife-2).